The primary structure comprises 566 residues: ALBINO3-like protein 3, mitochondrial (566 aa).

Residues 1–44 constitute a mitochondrion transit peptide; the sequence is MAFRRVLLSHLRRSHHTCSSLSPHHVSATTQPSIALALFQSRFF. The next 4 helical transmembrane spans lie at 139–159, 207–227, 249–269, and 301–321; these read WVVI…ILIL, LWVP…ITSI, LTEI…AGLH, and LLTC…LLYW. TPR repeat units follow at residues 386–419, 420–453, 465–498, and 507–540; these read PKEL…DPEY, LQAM…LLDT, IVAS…KEPD, and LDAL…DPSF. Residues 547–566 form a disordered region; that stretch reads CEEDDTIPTSSSSNSTSKTS. Residues 555 to 566 are compositionally biased toward low complexity; that stretch reads TSSSSNSTSKTS.

The protein belongs to the OXA1/ALB3/YidC (TC 2.A.9.2) family.

The protein resides in the mitochondrion inner membrane. Functionally, probably required for the insertion of integral membrane proteins into the mitochondrial inner membrane. The chain is ALBINO3-like protein 3, mitochondrial (ALB3L3) from Arabidopsis thaliana (Mouse-ear cress).